Reading from the N-terminus, the 247-residue chain is Synaptonemal complex central element protein 1-like (247 aa).

Positions 71 to 196 form a coiled coil; that stretch reads SEELGEAQAL…LQEARETWDS (126 aa). The interval 189 to 247 is disordered; that stretch reads EARETWDSPGNCGLKTELEELEGQSQRSPEAQNDKGEASQEEQHHLETSEELPRTGTLC. The segment covering 220 to 241 has biased composition (basic and acidic residues); sequence QNDKGEASQEEQHHLETSEELP.

Belongs to the SYCE family. In terms of tissue distribution, isoform 1 is abundantly expressed in testis and weakly in ovary, it is not found in other tissues. Isoform 2 is expressed in testis and poorly in brain, heart, lung and other examined tissues.

Its function is as follows. May be involved in meiosis. Isoform 1 may be involved in meiosis during spermatogenesis while isoform 2 is probably related to a later stage of meiosis, in the development stage of secondary spermatocytes and spermatids. This Mus musculus (Mouse) protein is Synaptonemal complex central element protein 1-like (Syce1l).